Reading from the N-terminus, the 556-residue chain is Man(5)GlcNAc(2)-PP-dolichol translocation protein RFT1 (556 aa).

A run of 12 helical transmembrane segments spans residues Leu-10–Ile-30, Glu-41–Ser-61, Leu-91–Leu-111, Val-129–Phe-149, Ile-156–Gly-176, Ala-184–Phe-204, Ser-353–Gly-373, Phe-389–Leu-409, Val-440–Phe-460, Ala-461–Ile-477, Leu-489–Cys-509, and Leu-517–Leu-537.

It belongs to the RFT1 family.

It is found in the endoplasmic reticulum membrane. The protein operates within protein modification; protein glycosylation. Intramembrane glycolipid transporter that operates in the biosynthetic pathway of dolichol-linked oligosaccharides, the glycan precursors employed in protein asparagine (N)-glycosylation. The sequential addition of sugars to dolichol pyrophosphate produces dolichol-linked oligosaccharides containing fourteen sugars, including two GlcNAcs, nine mannoses and three glucoses. Once assembled, the oligosaccharide is transferred from the lipid to nascent proteins by oligosaccharyltransferases. The assembly of dolichol-linked oligosaccharides begins on the cytosolic side of the endoplasmic reticulum membrane and finishes in its lumen. RFT1 could mediate the translocation of the cytosolically oriented intermediate DolPP-GlcNAc2Man5, produced by ALG11, into the ER lumen where dolichol-linked oligosaccharides assembly continues. However, the intramembrane lipid transporter activity could not be confirmed in vitro. The sequence is that of Man(5)GlcNAc(2)-PP-dolichol translocation protein RFT1 from Drosophila melanogaster (Fruit fly).